The chain runs to 847 residues: Alanine--tRNA ligase (847 aa).

Zn(2+) is bound by residues H554, H558, C656, and H660.

The protein belongs to the class-II aminoacyl-tRNA synthetase family. Requires Zn(2+) as cofactor.

It localises to the cytoplasm. It catalyses the reaction tRNA(Ala) + L-alanine + ATP = L-alanyl-tRNA(Ala) + AMP + diphosphate. Catalyzes the attachment of alanine to tRNA(Ala) in a two-step reaction: alanine is first activated by ATP to form Ala-AMP and then transferred to the acceptor end of tRNA(Ala). Also edits incorrectly charged Ser-tRNA(Ala) and Gly-tRNA(Ala) via its editing domain. This is Alanine--tRNA ligase from Helicobacter pylori (strain J99 / ATCC 700824) (Campylobacter pylori J99).